Here is a 267-residue protein sequence, read N- to C-terminus: Malonyl-[acyl-carrier protein] O-methyltransferase (267 aa).

This sequence belongs to the methyltransferase superfamily.

It carries out the reaction malonyl-[ACP] + S-adenosyl-L-methionine = malonyl-[ACP] methyl ester + S-adenosyl-L-homocysteine. Its pathway is cofactor biosynthesis; biotin biosynthesis. Functionally, converts the free carboxyl group of a malonyl-thioester to its methyl ester by transfer of a methyl group from S-adenosyl-L-methionine (SAM). It allows to synthesize pimeloyl-ACP via the fatty acid synthetic pathway. The chain is Malonyl-[acyl-carrier protein] O-methyltransferase from Yersinia pestis.